Here is a 183-residue protein sequence, read N- to C-terminus: Isopentenyl-diphosphate Delta-isomerase (183 aa).

Positions 26 and 33 each coordinate Mn(2+). The Nudix hydrolase domain maps to 31–165 (SLHLAFSSWL…PWAFSPWMVS (135 aa)). The active site involves Cys68. His70 lines the Mn(2+) pocket. A Mg(2+)-binding site is contributed by Glu88. 2 residues coordinate Mn(2+): Glu115 and Glu117. Glu117 is a catalytic residue.

It belongs to the IPP isomerase type 1 family. As to quaternary structure, homodimer. The cofactor is Mg(2+). It depends on Mn(2+) as a cofactor.

The protein resides in the cytoplasm. The catalysed reaction is isopentenyl diphosphate = dimethylallyl diphosphate. It participates in isoprenoid biosynthesis; dimethylallyl diphosphate biosynthesis; dimethylallyl diphosphate from isopentenyl diphosphate: step 1/1. Its function is as follows. Catalyzes the 1,3-allylic rearrangement of the homoallylic substrate isopentenyl (IPP) to its highly electrophilic allylic isomer, dimethylallyl diphosphate (DMAPP). The protein is Isopentenyl-diphosphate Delta-isomerase of Enterobacter sp. (strain 638).